The sequence spans 344 residues: Uroporphyrinogen decarboxylase (344 aa).

Residues 26–30 (RQAGR), Asp-76, Tyr-152, Ser-207, and His-323 each bind substrate.

It belongs to the uroporphyrinogen decarboxylase family. As to quaternary structure, homodimer.

It localises to the cytoplasm. The enzyme catalyses uroporphyrinogen III + 4 H(+) = coproporphyrinogen III + 4 CO2. It functions in the pathway porphyrin-containing compound metabolism; protoporphyrin-IX biosynthesis; coproporphyrinogen-III from 5-aminolevulinate: step 4/4. In terms of biological role, catalyzes the decarboxylation of four acetate groups of uroporphyrinogen-III to yield coproporphyrinogen-III. This is Uroporphyrinogen decarboxylase from Hyphomonas neptunium (strain ATCC 15444).